A 484-amino-acid chain; its full sequence is Signal transduction histidine-protein kinase/phosphatase MprB (484 aa).

A compositionally biased stretch (low complexity) spans 1–10 (MAADNAGRWP). The disordered stretch occupies residues 1 to 23 (MAADNAGRWPGQPPGPPAPTHPA). Over 1 to 31 (MAADNAGRWPGQPPGPPAPTHPASSVSLRWR) the chain is Cytoplasmic. Residues 11-20 (GQPPGPPAPT) show a composition bias toward pro residues. The helical transmembrane segment at 32 to 52 (VMLLAMSMVVISVVLMAVAVF) threads the bilayer. Residues 53 to 172 (AVTSRALYDD…TGKVLKRLGT (120 aa)) are Extracellular-facing. The helical transmembrane segment at 173–193 (VLLIVGGLGVAVAAIAGGMVA) threads the bilayer. In terms of domain architecture, HAMP spans 194–246 (SAGLRPVGRLTQAAERVARTDDLRPIPVIGNDELARLTETFNMMLRALAESRE). Residues 194 to 484 (SAGLRPVGRL…SPAGSDEAER (291 aa)) lie on the Cytoplasmic side of the membrane. Residues 254-474 (DAGHELRTPL…AMHVVLPGRP (221 aa)) enclose the Histidine kinase domain. His-257 bears the Phosphohistidine; by autocatalysis mark.

Mg(2+) is required as a cofactor. Requires Mn(2+) as cofactor. In terms of processing, autophosphorylated.

It is found in the cell membrane. The enzyme catalyses ATP + protein L-histidine = ADP + protein N-phospho-L-histidine.. Member of the two-component regulatory system MprB/MprA which contributes to maintaining a balance among several systems involved in stress resistance and is required for establishment and maintenance of persistent infection in the host. In response to environmental signals MprB acts both as a membrane-associated protein kinase that undergoes autophosphorylation and subsequently transfers the phosphate to MprA, and a protein phosphatase that dephosphorylates phospho-MprA. This chain is Signal transduction histidine-protein kinase/phosphatase MprB (mprB), found in Mycolicibacterium vanbaalenii (strain DSM 7251 / JCM 13017 / BCRC 16820 / KCTC 9966 / NRRL B-24157 / PYR-1) (Mycobacterium vanbaalenii).